Here is a 212-residue protein sequence, read N- to C-terminus: Large ribosomal subunit protein uL3 (212 aa).

Residues 139-153 (LSHRVTGSIGQNQTP) show a composition bias toward polar residues. The segment at 139–161 (LSHRVTGSIGQNQTPGKVFKGKK) is disordered. An N5-methylglutamine modification is found at Gln-151.

Belongs to the universal ribosomal protein uL3 family. As to quaternary structure, part of the 50S ribosomal subunit. Forms a cluster with proteins L14 and L19. In terms of processing, methylated by PrmB.

Its function is as follows. One of the primary rRNA binding proteins, it binds directly near the 3'-end of the 23S rRNA, where it nucleates assembly of the 50S subunit. The polypeptide is Large ribosomal subunit protein uL3 (Baumannia cicadellinicola subsp. Homalodisca coagulata).